Here is a 699-residue protein sequence, read N- to C-terminus: Polyribonucleotide nucleotidyltransferase (699 aa).

Mg(2+) is bound by residues Asp485 and Asp491. A KH domain is found at 552–611 (PRITTIKINPEKIRDVIGKGGAVIRALTEETGTTIELEDDGTVKIASSNGEATKEAIRRI). An S1 motif domain is found at 621 to 689 (GRIYNGKVIR…RQGRVRLSIK (69 aa)).

It belongs to the polyribonucleotide nucleotidyltransferase family. Component of the RNA degradosome, which is a multiprotein complex involved in RNA processing and mRNA degradation. It depends on Mg(2+) as a cofactor.

The protein localises to the cytoplasm. The catalysed reaction is RNA(n+1) + phosphate = RNA(n) + a ribonucleoside 5'-diphosphate. Involved in mRNA degradation. Catalyzes the phosphorolysis of single-stranded polyribonucleotides processively in the 3'- to 5'-direction. The protein is Polyribonucleotide nucleotidyltransferase of Shewanella sp. (strain MR-7).